A 170-amino-acid polypeptide reads, in one-letter code: Adenine phosphoribosyltransferase (170 aa).

Belongs to the purine/pyrimidine phosphoribosyltransferase family. In terms of assembly, homodimer.

It localises to the cytoplasm. The enzyme catalyses AMP + diphosphate = 5-phospho-alpha-D-ribose 1-diphosphate + adenine. It participates in purine metabolism; AMP biosynthesis via salvage pathway; AMP from adenine: step 1/1. Its function is as follows. Catalyzes a salvage reaction resulting in the formation of AMP, that is energically less costly than de novo synthesis. The sequence is that of Adenine phosphoribosyltransferase from Streptococcus sanguinis (strain SK36).